Consider the following 261-residue polypeptide: Adenosylcobinamide-GDP ribazoletransferase (261 aa).

The next 7 membrane-spanning stretches (helical) occupy residues 4 to 26, 40 to 60, 62 to 82, 110 to 130, 140 to 160, 197 to 217, and 237 to 257; these read GLNG…QIPW, LTGL…SPFL, PLVL…GLHL, VGAF…LLLM, FTWL…VQLI, CFLL…IWLF, and IGAS…TFFL.

Belongs to the CobS family. Requires Mg(2+) as cofactor.

It is found in the cell membrane. It catalyses the reaction alpha-ribazole + adenosylcob(III)inamide-GDP = adenosylcob(III)alamin + GMP + H(+). The enzyme catalyses alpha-ribazole 5'-phosphate + adenosylcob(III)inamide-GDP = adenosylcob(III)alamin 5'-phosphate + GMP + H(+). Its pathway is cofactor biosynthesis; adenosylcobalamin biosynthesis; adenosylcobalamin from cob(II)yrinate a,c-diamide: step 7/7. Joins adenosylcobinamide-GDP and alpha-ribazole to generate adenosylcobalamin (Ado-cobalamin). Also synthesizes adenosylcobalamin 5'-phosphate from adenosylcobinamide-GDP and alpha-ribazole 5'-phosphate. The protein is Adenosylcobinamide-GDP ribazoletransferase of Halalkalibacterium halodurans (strain ATCC BAA-125 / DSM 18197 / FERM 7344 / JCM 9153 / C-125) (Bacillus halodurans).